The chain runs to 316 residues: tRNA dimethylallyltransferase (316 aa).

17-24 (GPTASGKT) lines the ATP pocket. Residue 19–24 (TASGKT) coordinates substrate. Interaction with substrate tRNA regions lie at residues 42-45 (DSAL), 166-170 (QRLSR), and 247-252 (RCVGYR).

The protein belongs to the IPP transferase family. As to quaternary structure, monomer. Mg(2+) serves as cofactor.

The enzyme catalyses adenosine(37) in tRNA + dimethylallyl diphosphate = N(6)-dimethylallyladenosine(37) in tRNA + diphosphate. Functionally, catalyzes the transfer of a dimethylallyl group onto the adenine at position 37 in tRNAs that read codons beginning with uridine, leading to the formation of N6-(dimethylallyl)adenosine (i(6)A). The polypeptide is tRNA dimethylallyltransferase (Salmonella paratyphi C (strain RKS4594)).